The primary structure comprises 305 residues: tRNA pseudouridine synthase B (305 aa).

Catalysis depends on Asp48, which acts as the Nucleophile.

It belongs to the pseudouridine synthase TruB family. Type 1 subfamily.

The catalysed reaction is uridine(55) in tRNA = pseudouridine(55) in tRNA. In terms of biological role, responsible for synthesis of pseudouridine from uracil-55 in the psi GC loop of transfer RNAs. This is tRNA pseudouridine synthase B from Actinobacillus pleuropneumoniae serotype 5b (strain L20).